The primary structure comprises 440 residues: Lysine histidine transporter-like 6 (440 aa).

Over residues 1-10 the composition is skewed to polar residues; sequence MVSSSPVSPS. The interval 1 to 25 is disordered; the sequence is MVSSSPVSPSKETDRKSGEKWTAED. Topologically, residues 1-31 are cytoplasmic; it reads MVSSSPVSPSKETDRKSGEKWTAEDPSRPAK. Residues 11-25 show a composition bias toward basic and acidic residues; sequence KETDRKSGEKWTAED. Residues 32–51 form a helical membrane-spanning segment; that stretch reads WWYSTFHTVTAMIGAGVLSL. The Extracellular segment spans residues 52–61; sequence PYAMAYLGWG. A helical membrane pass occupies residues 62-82; sequence PGTFVLAMTWGLTLNTMWQMV. Residues 83–109 lie on the Cytoplasmic side of the membrane; it reads QLHECVPGTRFDRYIDLGRYAFGPKLG. Residues 110 to 130 traverse the membrane as a helical segment; sequence PWIVLPQQLIVQVGCNIVYMV. At 131–152 the chain is on the extracellular side; the sequence is TGGKCLKQFVEITCSTCTPVRQ. The chain crosses the membrane as a helical span at residues 153-173; that stretch reads SYWILGFGGVHFILSQLPNFN. Residue S174 is a topological domain, cytoplasmic. A helical membrane pass occupies residues 175-195; that stretch reads VAGVSLAAAVMSLCYSTIAWG. Topologically, residues 196 to 221 are extracellular; the sequence is GSIAHGRVPDVSYDYKATNPGDFTFR. Residues 222–242 form a helical membrane-spanning segment; sequence VFNALGQISFAFAGHAVALEI. Over 243–261 the chain is Cytoplasmic; the sequence is QATMPSTPERPSKVPMWQG. The chain crosses the membrane as a helical span at residues 262 to 282; the sequence is VIGAYVVNAVCYFPVALICYW. Topologically, residues 283–300 are extracellular; the sequence is AFGQDVDDNVLMNLQRPA. Residues 301–321 traverse the membrane as a helical segment; it reads WLIAAANLMVVVHVIGSYQVF. The Cytoplasmic portion of the chain corresponds to 322 to 353; the sequence is AMPVFDLLERMMVNKFGFKHGVVLRFFTRTIY. A run of 2 helical transmembrane segments spans residues 354–374 and 375–395; these read VAFT…LGFF and GGFG…LIIK. The Cytoplasmic segment spans residues 396–399; the sequence is KPRR. Residues 400 to 420 traverse the membrane as a helical segment; sequence FSVTWFVNWISIIVGVFIMLA. The Extracellular portion of the chain corresponds to 421-440; sequence STIGGLRNIIADSSTYSFYA.

It belongs to the amino acid/polyamine transporter 2 family. Amino acid/auxin permease (AAAP) (TC 2.A.18.2) subfamily.

Its subcellular location is the cell membrane. Its function is as follows. Amino acid transporter. The chain is Lysine histidine transporter-like 6 from Arabidopsis thaliana (Mouse-ear cress).